Reading from the N-terminus, the 466-residue chain is Sucrose-6-phosphate hydrolase (466 aa).

Residues 38–41 (LLND), Gln57, 100–101 (YS), 159–160 (RD), and Glu218 contribute to the substrate site. The active site involves Asp41.

Its subcellular location is the cytoplasm. It carries out the reaction Hydrolysis of terminal non-reducing beta-D-fructofuranoside residues in beta-D-fructofuranosides.. It participates in glycan biosynthesis; sucrose metabolism. Its function is as follows. Hydrolyzes sucrose and sucrose-6P, but fails to hydrolyze any of the phosphorylated isomers of sucrose and other phospho-D-glucosides, including maltose-6'P and trehalose-6P. In Klebsiella pneumoniae, this protein is Sucrose-6-phosphate hydrolase (scrB).